The sequence spans 355 residues: Glutamyl aminopeptidase (355 aa).

A divalent metal cation-binding residues include His65 and Asp181. Glu213 serves as the catalytic Proton acceptor. A divalent metal cation is bound by residues Glu214, Asp236, and His319.

Belongs to the peptidase M42 family. It depends on a divalent metal cation as a cofactor.

It carries out the reaction Release of N-terminal glutamate (and to a lesser extent aspartate) from a peptide.. The protein is Glutamyl aminopeptidase (pepA) of Lactococcus lactis subsp. cremoris (strain MG1363).